We begin with the raw amino-acid sequence, 247 residues long: MSLLPLTPSLRPFLEEYLPRPCSNRPFVTLTYAQSLDSRIAAKPGEQTKISHLETKTMTHYIRSKHDGIMVGIGTVLADDPKLNCRFEAEDGNISTPRPIILDPTGKWAYHKSQLRSVCDNNKGLAPFILIDETVTPRNEDVEVLDKQDGAFVRLPLLRNADKVGNWNIILKKLFQLGIKSIMVEGGASIINDLLVYSKIIDSLIITIGPVFLGKDGVEVSPSGHAGLIDVKWWQGIQDSVLCARLT.

Residues T75, D79, G165, and 187-191 (GASII) contribute to the NADP(+) site.

It belongs to the HTP reductase family. Homodimer.

It carries out the reaction 2,5-diamino-6-(1-D-ribitylamino)pyrimidin-4(3H)-one 5'-phosphate + NADP(+) = 2,5-diamino-6-(1-D-ribosylamino)pyrimidin-4(3H)-one 5'-phosphate + NADPH + H(+). The enzyme catalyses 2,5-diamino-6-(1-D-ribitylamino)pyrimidin-4(3H)-one 5'-phosphate + NAD(+) = 2,5-diamino-6-(1-D-ribosylamino)pyrimidin-4(3H)-one 5'-phosphate + NADH + H(+). The protein operates within cofactor biosynthesis; riboflavin biosynthesis. Functionally, catalyzes an early step in riboflavin biosynthesis, the NADPH-dependent reduction of the ribose side chain of 2,5-diamino-6-ribosylamino-4(3H)-pyrimidinone 5'-phosphate, yielding 2,5-diamino-6-ribitylamino-4(3H)-pyrimidinone 5'-phosphate. In Debaryomyces hansenii (strain ATCC 36239 / CBS 767 / BCRC 21394 / JCM 1990 / NBRC 0083 / IGC 2968) (Yeast), this protein is 2,5-diamino-6-ribosylamino-4(3H)-pyrimidinone 5'-phosphate reductase (RIB7).